The sequence spans 343 residues: Glycogen biosynthesis protein GlgD (343 aa).

The protein belongs to the bacterial/plant glucose-1-phosphate adenylyltransferase family.

Its function is as follows. Required for the synthesis of glycogen. In Bacillus subtilis (strain 168), this protein is Glycogen biosynthesis protein GlgD (glgD).